The chain runs to 269 residues: Phosphonates import ATP-binding protein PhnC 2 (269 aa).

Positions 2–246 (LRIDSLSKRY…VLNEIYGEED (245 aa)) constitute an ABC transporter domain. Residue 35–42 (GPSGAGKS) participates in ATP binding. The disordered stretch occupies residues 246–269 (DWNASGPAQDSEENEAVSAGVATH).

It belongs to the ABC transporter superfamily. Phosphonates importer (TC 3.A.1.9.1) family. As to quaternary structure, the complex is composed of two ATP-binding proteins (PhnC), two transmembrane proteins (PhnE) and a solute-binding protein (PhnD).

It is found in the cell inner membrane. The enzyme catalyses phosphonate(out) + ATP + H2O = phosphonate(in) + ADP + phosphate + H(+). Its function is as follows. Part of the ABC transporter complex PhnCDE involved in phosphonates import. Responsible for energy coupling to the transport system. This chain is Phosphonates import ATP-binding protein PhnC 2, found in Synechococcus sp. (strain JA-2-3B'a(2-13)) (Cyanobacteria bacterium Yellowstone B-Prime).